Consider the following 75-residue polypeptide: Acyl carrier protein (75 aa).

In terms of domain architecture, Carrier spans 1–74 (MLDKVKEIIV…DVINYIEANK (74 aa)). Position 34 is an O-(pantetheine 4'-phosphoryl)serine (S34).

This sequence belongs to the acyl carrier protein (ACP) family. Post-translationally, 4'-phosphopantetheine is transferred from CoA to a specific serine of apo-ACP by AcpS. This modification is essential for activity because fatty acids are bound in thioester linkage to the sulfhydryl of the prosthetic group.

The protein resides in the cytoplasm. Its pathway is lipid metabolism; fatty acid biosynthesis. Carrier of the growing fatty acid chain in fatty acid biosynthesis. The polypeptide is Acyl carrier protein (Fusobacterium nucleatum subsp. nucleatum (strain ATCC 25586 / DSM 15643 / BCRC 10681 / CIP 101130 / JCM 8532 / KCTC 2640 / LMG 13131 / VPI 4355)).